Consider the following 510-residue polypeptide: ATP synthase subunit alpha (510 aa).

170–177 is an ATP binding site; sequence GDRQTGKT.

Belongs to the ATPase alpha/beta chains family. F-type ATPases have 2 components, CF(1) - the catalytic core - and CF(0) - the membrane proton channel. CF(1) has five subunits: alpha(3), beta(3), gamma(1), delta(1), epsilon(1). CF(0) has three main subunits: a(1), b(2) and c(9-12). The alpha and beta chains form an alternating ring which encloses part of the gamma chain. CF(1) is attached to CF(0) by a central stalk formed by the gamma and epsilon chains, while a peripheral stalk is formed by the delta and b chains.

Its subcellular location is the cell inner membrane. The enzyme catalyses ATP + H2O + 4 H(+)(in) = ADP + phosphate + 5 H(+)(out). Produces ATP from ADP in the presence of a proton gradient across the membrane. The alpha chain is a regulatory subunit. The polypeptide is ATP synthase subunit alpha (Maricaulis maris (strain MCS10) (Caulobacter maris)).